A 164-amino-acid chain; its full sequence is Arginine repressor (164 aa).

This sequence belongs to the ArgR family.

Its subcellular location is the cytoplasm. Its pathway is amino-acid biosynthesis; L-arginine biosynthesis [regulation]. Regulates arginine biosynthesis genes. This Mycobacterium avium (strain 104) protein is Arginine repressor.